We begin with the raw amino-acid sequence, 1821 residues long: PH-interacting protein (1821 aa).

Residue S136 is modified to Phosphoserine. 5 WD repeats span residues G181–R222, H224–V262, G265–R310, R319–E360, and F363–I402. K421 is covalently cross-linked (Glycyl lysine isopeptide (Lys-Gly) (interchain with G-Cter in SUMO2)). WD repeat units follow at residues I422–V461, G464–S504, and Q512–K551. S641, S659, S674, S677, S683, and S692 each carry phosphoserine. Disordered regions lie at residues E653–I695 and D782–V927. A compositionally biased stretch (polar residues) spans S665–V681. The segment covering S800–E810 has biased composition (basic and acidic residues). Over residues S841–D854 the composition is skewed to low complexity. 4 positions are modified to phosphoserine: S879, S880, S881, and S911. Residues P912–R924 show a composition bias toward basic residues. The mediates interaction with IRS1 stretch occupies residues R924–F1129. The 108-residue stretch at W1156–Q1263 folds into the Bromo 1 domain. A phosphoserine mark is found at S1281, S1283, and S1296. The disordered stretch occupies residues D1282–R1310. Over residues T1297–R1310 the composition is skewed to basic residues. S1315 bears the Phosphoserine mark. A Bromo 2 domain is found at Y1316–V1421. Phosphothreonine is present on T1359. S1405 is modified (phosphoserine). The segment covering N1435–R1446 has biased composition (basic residues). The segment at N1435–R1507 is disordered. The span at S1447 to S1457 shows a compositional bias: low complexity. A Glycyl lysine isopeptide (Lys-Gly) (interchain with G-Cter in SUMO1); alternate cross-link involves residue K1470. K1470 is covalently cross-linked (Glycyl lysine isopeptide (Lys-Gly) (interchain with G-Cter in SUMO2); alternate). Over residues S1471–T1482 the composition is skewed to polar residues. Position 1479 is a phosphoserine (S1479). The residue at position 1497 (K1497) is an N6-acetyllysine. S1525 carries the post-translational modification Phosphoserine. K1533 carries the post-translational modification N6-acetyllysine. Residues S1556–K1576 are compositionally biased toward polar residues. 3 disordered regions span residues S1556–K1596, Q1623–Q1676, and R1740–E1785. S1560 is subject to Phosphoserine. Residue K1644 forms a Glycyl lysine isopeptide (Lys-Gly) (interchain with G-Cter in SUMO2) linkage. A Phosphoserine modification is found at S1651. A Glycyl lysine isopeptide (Lys-Gly) (interchain with G-Cter in SUMO2) cross-link involves residue K1670. S1762 and S1783 each carry phosphoserine.

As to quaternary structure, interacts (via bromo domain) with acetylated lysine residues on histone H1.4, histone H3 and H4 (in vitro). Interacts with IRS1 and IRS2. As to expression, widely expressed with most abundant expression detected in pancreatic islets, brain and skeletal muscle. Predominantly expressed in developing and regenerating neurons. Expressed in adult brain (granular layer of the olfactorium bulb, hippocampus, dentate gyrus and cerebellum internal granular layer). Expressed in the CA3 region of adult hippocampus, adult and fetal retina, perinatal dorsal root ganglion and embryonal olfactory epithelia (at protein level).

The protein localises to the nucleus. In terms of biological role, probable regulator of the insulin and insulin-like growth factor signaling pathways. Stimulates cell proliferation through regulation of cyclin transcription and has an anti-apoptotic activity through AKT1 phosphorylation and activation. Plays a role in the regulation of cell morphology and cytoskeletal organization. The sequence is that of PH-interacting protein (Phip) from Mus musculus (Mouse).